Consider the following 752-residue polypeptide: Endo-1,4-beta-xylanase 3 (752 aa).

The segment at 1 to 22 (MEKNTNTNHTSDDNNDKNHTNE) is disordered. Residues 10 to 22 (TSDDNNDKNHTNE) show a composition bias toward basic and acidic residues. CBM-cenC domains are found at residues 26-163 (KIIL…EGPP) and 197-344 (NIVE…VQGP). Residues 397–692 (FPYIVKVKQT…NEAGKRFLEV (296 aa)) enclose the GH10 domain. Glutamate 526 serves as the catalytic Proton donor. Glutamate 627 (nucleophile) is an active-site residue.

The protein belongs to the glycosyl hydrolase 10 (cellulase F) family. As to expression, confined to immature xylems.

The enzyme catalyses Endohydrolysis of (1-&gt;4)-beta-D-xylosidic linkages in xylans.. It participates in glycan degradation; xylan degradation. In terms of biological role, binds to and hydrolyzes insoluble and soluble xylan substrates. In Arabidopsis thaliana (Mouse-ear cress), this protein is Endo-1,4-beta-xylanase 3.